A 249-amino-acid polypeptide reads, in one-letter code: Low affinity immunoglobulin gamma Fc region receptor III-A (249 aa).

An N-terminal signal peptide occupies residues 1 to 20 (MWQLLLPTALVLTAFSGIQA). The Extracellular portion of the chain corresponds to 21 to 203 (GLQKAVVNLD…SPSMFPPWHQ (183 aa)). Ig-like C2-type domains are found at residues 22 to 102 (LQKA…VQLE) and 119 to 188 (EGDP…FRIS). Intrachain disulfides connect cysteine 46/cysteine 88 and cysteine 127/cysteine 171. N-linked (GlcNAc...) asparagine glycans are attached at residues asparagine 62, asparagine 164, and asparagine 179. A helical membrane pass occupies residues 204 to 224 (ITFCLLIGLLFAIDTVLYFSV). Topologically, residues 225–249 (RRGLQSPVADYEEPKIQWSKEPQDK) are cytoplasmic. Position 235 is a phosphotyrosine (tyrosine 235).

Forms a heterooligomeric complex with ITAM-containing signaling subunits FCER1G. Interacts (via transmembrane domain) with signaling subunits; this interaction is a prerequisite for receptor complex expression on the cell surface and intracellular signal transduction. Binds the Fc region of antigen-complexed IgG. In terms of processing, N-glycosylated. Post-translationally, phosphorylated following receptor ligation. Detected on myeloid cells, peripheral blood monocytes, splenic and bone marrow dendritic cells, and thioglycollate-elicited macrophages and neutrophils but absent from lymphoid populations with no expression observed on T cells, B cells, NK cells or other granulocytes (at protein level). Expressed in peripheral blood leukocytes, spleen, liver, thymus and small intestine. Expressed in splenic dendritic cell subsets (at protein level).

It localises to the cell membrane. In terms of biological role, receptor for the invariable Fc fragment of immunoglobulin gamma (IgG). Binds with intermediate affinity to both IgG2a and IgG2b. Can bind to IgG2a and IgG2b monomers. Does not display binding to IgG1 or IgG3. Recognizes neutralizing virus-specific IgGs displayed on the cell surface of infected cells and triggers antibody-dependent cellular cytotoxicity (ADCC). Confers protection to lethal influenza virus infection. On splenic dendritic cells, uptakes antigen immune complexes and efficiently divert them into MHC class I and II antigen presentation pathways to provide for superior priming of CD4-positive and CD8-positive T cell immune responses. Mediates neutrophil activation by IgG complexes redundantly with FCGR2A. Plays a role in promoting bone resorption by enhancing osteoclast differentiation following binding to IgG2a. Also acts as a receptor for the Fc region of immunoglobulin epsilon (IgE). Binds with low affinity to both the a and b allotypes of IgE. Has also been shown to bind to IgE allotype a only but not to allotype b. Binds aggregated IgE but not the monomeric form and bound monomeric IgG is readily displaced by IgE complexes. Binding to IgE promotes macrophage-mediated phagocytosis, antigen presentation to T cells, production of pro-inflammatory cytokines and the late phase of cutaneous allergic reactions. Mediates enhanced ADCC in response to afucosylated IgGs. The protein is Low affinity immunoglobulin gamma Fc region receptor III-A of Mus musculus (Mouse).